Consider the following 502-residue polypeptide: Probable malate:quinone oxidoreductase 1 (502 aa).

The protein belongs to the MQO family. The cofactor is FAD.

It carries out the reaction (S)-malate + a quinone = a quinol + oxaloacetate. Its pathway is carbohydrate metabolism; tricarboxylic acid cycle; oxaloacetate from (S)-malate (quinone route): step 1/1. This is Probable malate:quinone oxidoreductase 1 from Pseudomonas putida (strain ATCC 47054 / DSM 6125 / CFBP 8728 / NCIMB 11950 / KT2440).